The following is a 156-amino-acid chain: Small ribosomal subunit protein uS7c (156 aa).

It belongs to the universal ribosomal protein uS7 family. In terms of assembly, part of the 30S ribosomal subunit.

The protein resides in the plastid. The protein localises to the chloroplast. Its function is as follows. One of the primary rRNA binding proteins, it binds directly to 16S rRNA where it nucleates assembly of the head domain of the 30S subunit. The sequence is that of Small ribosomal subunit protein uS7c (rps7) from Cycas revoluta (Sago palm).